Consider the following 256-residue polypeptide: Chloroplastic group IIB intron splicing facilitator CRS2, chloroplastic (256 aa).

A chloroplast-targeting transit peptide spans 1-45; sequence MSLLAAAIPSTSSHFSAPFLPSFRMPRKSLTAPLHRIRRPRPFTV. Position 74 (Tyr74) interacts with tRNA. Catalysis depends on His79, which acts as the Proton acceptor. TRNA contacts are provided by Tyr124, Asn126, and Asn172.

Belongs to the PTH family. CRS2 subfamily. As to quaternary structure, interacts with CAF1 and CAF2. Part of large ribonucleo-protein complexes that include group IIB introns and either CAF1 or CAF2.

The protein resides in the plastid. It is found in the chloroplast stroma. Functionally, required for the splicing of group IIB introns in chloroplasts. Forms complexes with either CAF1 or CAF2 which, in turn, interact with RNA and confer intron specificity of the splicing particles. Has no peptidyl-tRNA hydrolase activity. This chain is Chloroplastic group IIB intron splicing facilitator CRS2, chloroplastic (CRS2), found in Zea mays (Maize).